We begin with the raw amino-acid sequence, 203 residues long: Outer-membrane lipoprotein carrier protein (203 aa).

The N-terminal stretch at 1–21 is a signal peptide; the sequence is MKKWLAISCLIAGVTSTAVYA.

It belongs to the LolA family. Monomer.

It is found in the periplasm. In terms of biological role, participates in the translocation of lipoproteins from the inner membrane to the outer membrane. Only forms a complex with a lipoprotein if the residue after the N-terminal Cys is not an aspartate (The Asp acts as a targeting signal to indicate that the lipoprotein should stay in the inner membrane). The protein is Outer-membrane lipoprotein carrier protein of Pectobacterium atrosepticum (strain SCRI 1043 / ATCC BAA-672) (Erwinia carotovora subsp. atroseptica).